A 270-amino-acid polypeptide reads, in one-letter code: Monofunctional glycosyltransferase (270 aa).

Polar residues predominate over residues 1 to 10 (MKRSQRMNNS). The tract at residues 1-36 (MKRSQRMNNSPERHSQYRNEPHYNTYYQPVGKPPKK) is disordered. Basic and acidic residues predominate over residues 11 to 21 (PERHSQYRNEP). Residues 42 to 62 (IFLRLFIIFVFIYALFIGLMY) form a helical membrane-spanning segment.

The protein belongs to the glycosyltransferase 51 family.

The protein localises to the cell membrane. The catalysed reaction is [GlcNAc-(1-&gt;4)-Mur2Ac(oyl-L-Ala-gamma-D-Glu-L-Lys-D-Ala-D-Ala)](n)-di-trans,octa-cis-undecaprenyl diphosphate + beta-D-GlcNAc-(1-&gt;4)-Mur2Ac(oyl-L-Ala-gamma-D-Glu-L-Lys-D-Ala-D-Ala)-di-trans,octa-cis-undecaprenyl diphosphate = [GlcNAc-(1-&gt;4)-Mur2Ac(oyl-L-Ala-gamma-D-Glu-L-Lys-D-Ala-D-Ala)](n+1)-di-trans,octa-cis-undecaprenyl diphosphate + di-trans,octa-cis-undecaprenyl diphosphate + H(+). Its pathway is cell wall biogenesis; peptidoglycan biosynthesis. In terms of biological role, peptidoglycan polymerase that catalyzes glycan chain elongation using lipid-linked disaccharide-pentapeptide as the substrate. This Staphylococcus haemolyticus (strain JCSC1435) protein is Monofunctional glycosyltransferase.